A 608-amino-acid chain; its full sequence is RAS guanyl-releasing protein 2 (608 aa).

The N-terminal Ras-GEF domain occupies 4–126 (TLDLDKGCTV…SLIDIESVPT (123 aa)). S116, S117, and S147 each carry phosphoserine. A Ras-GEF domain is found at 154 to 387 (EPMELAEHLT…YQLSLQREPR (234 aa)). The disordered stretch occupies residues 382–405 (LQREPRSKSSPTSPTSCTPPPRPP). 2 consecutive EF-hand domains span residues 426–461 (HIEK…FPYL) and 463–490 (AFGD…SSSV). Residues D439, D441, D443, H445, E450, D468, N470, D472, C474, and E479 each coordinate Ca(2+). Residues 498 to 548 (VHNFQESNSLRPVACRHCKALILGIYKQGLKCRACGVNCHKQCKERLSVEC) form a Phorbol-ester/DAG-type zinc finger. Phosphoserine is present on residues S554 and S575. The disordered stretch occupies residues 555 to 596 (VSLEGSAPSPSPTHTHHRAFSFSLPRPGRRSSRPPEIREEEV).

It belongs to the RASGRP family. As to quaternary structure, forms a signaling complex with RAP1 and BRAF. Interacts with F-actin. Interacts with RAP1. As to expression, detected in megakaryocytes, platelet and neutrophils but not in lymphocytes (at protein level). Isoform 1 and isoform 3 are detected in brain basal glanglia, heart, lung, spleen, liver and kidney interstitial cells.

It localises to the cytoplasm. It is found in the cytosol. The protein localises to the cell membrane. The protein resides in the synapse. Its subcellular location is the synaptosome. It localises to the cell projection. It is found in the ruffle membrane. Its function is as follows. Functions as a calcium- and DAG-regulated nucleotide exchange factor specifically activating Rap through the exchange of bound GDP for GTP. May also activate other GTPases such as RRAS, RRAS2, NRAS, KRAS but not HRAS. Functions in aggregation of platelets and adhesion of T-lymphocytes and neutrophils probably through inside-out integrin activation. May function in the muscarinic acetylcholine receptor M1/CHRM1 signaling pathway. The sequence is that of RAS guanyl-releasing protein 2 (Rasgrp2) from Mus musculus (Mouse).